The primary structure comprises 941 residues: Bifunctional glutamine synthetase adenylyltransferase/adenylyl-removing enzyme (941 aa).

Residues 1 to 431 are adenylyl removase; the sequence is MSSAPPFAAA…TFRNAFRLAG (431 aa). Residues 447–941 form an adenylyl transferase region; it reads NGHGMRPHAG…DGTIAQAEVK (495 aa).

The protein belongs to the GlnE family. It depends on Mg(2+) as a cofactor.

It carries out the reaction [glutamine synthetase]-O(4)-(5'-adenylyl)-L-tyrosine + phosphate = [glutamine synthetase]-L-tyrosine + ADP. The enzyme catalyses [glutamine synthetase]-L-tyrosine + ATP = [glutamine synthetase]-O(4)-(5'-adenylyl)-L-tyrosine + diphosphate. Involved in the regulation of glutamine synthetase GlnA, a key enzyme in the process to assimilate ammonia. When cellular nitrogen levels are high, the C-terminal adenylyl transferase (AT) inactivates GlnA by covalent transfer of an adenylyl group from ATP to specific tyrosine residue of GlnA, thus reducing its activity. Conversely, when nitrogen levels are low, the N-terminal adenylyl removase (AR) activates GlnA by removing the adenylyl group by phosphorolysis, increasing its activity. The regulatory region of GlnE binds the signal transduction protein PII (GlnB) which indicates the nitrogen status of the cell. The polypeptide is Bifunctional glutamine synthetase adenylyltransferase/adenylyl-removing enzyme (Bordetella bronchiseptica (strain ATCC BAA-588 / NCTC 13252 / RB50) (Alcaligenes bronchisepticus)).